Consider the following 454-residue polypeptide: Ribosomal protein uS12 methylthiotransferase RimO (454 aa).

In terms of domain architecture, MTTase N-terminal spans 14-125; sequence SKIAFSHVGC…IAKVLDRVEK (112 aa). Cysteine 23, cysteine 59, cysteine 88, cysteine 163, cysteine 167, and cysteine 170 together coordinate [4Fe-4S] cluster. Positions 149–378 constitute a Radical SAM core domain; it reads DKNKFVAYLR…ISVQQNISRE (230 aa). Residues 381–452 form the TRAM domain; that stretch reads QIYVGSKMKI…EYDLYGETIK (72 aa).

The protein belongs to the methylthiotransferase family. RimO subfamily. Requires [4Fe-4S] cluster as cofactor.

The protein resides in the cytoplasm. The catalysed reaction is L-aspartate(89)-[ribosomal protein uS12]-hydrogen + (sulfur carrier)-SH + AH2 + 2 S-adenosyl-L-methionine = 3-methylsulfanyl-L-aspartate(89)-[ribosomal protein uS12]-hydrogen + (sulfur carrier)-H + 5'-deoxyadenosine + L-methionine + A + S-adenosyl-L-homocysteine + 2 H(+). Functionally, catalyzes the methylthiolation of an aspartic acid residue of ribosomal protein uS12. The polypeptide is Ribosomal protein uS12 methylthiotransferase RimO (Prochlorococcus marinus (strain MIT 9301)).